The primary structure comprises 232 residues: Uracil-DNA glycosylase (232 aa).

Asp-71 (proton acceptor) is an active-site residue.

The protein belongs to the uracil-DNA glycosylase (UDG) superfamily. UNG family.

Its subcellular location is the cytoplasm. The catalysed reaction is Hydrolyzes single-stranded DNA or mismatched double-stranded DNA and polynucleotides, releasing free uracil.. Excises uracil residues from the DNA which can arise as a result of misincorporation of dUMP residues by DNA polymerase or due to deamination of cytosine. The polypeptide is Uracil-DNA glycosylase (Azotobacter vinelandii (strain DJ / ATCC BAA-1303)).